A 250-amino-acid chain; its full sequence is Imidazole glycerol phosphate synthase subunit HisF (250 aa).

Catalysis depends on residues Asp11 and Asp130.

It belongs to the HisA/HisF family. Heterodimer of HisH and HisF.

The protein localises to the cytoplasm. It catalyses the reaction 5-[(5-phospho-1-deoxy-D-ribulos-1-ylimino)methylamino]-1-(5-phospho-beta-D-ribosyl)imidazole-4-carboxamide + L-glutamine = D-erythro-1-(imidazol-4-yl)glycerol 3-phosphate + 5-amino-1-(5-phospho-beta-D-ribosyl)imidazole-4-carboxamide + L-glutamate + H(+). It participates in amino-acid biosynthesis; L-histidine biosynthesis; L-histidine from 5-phospho-alpha-D-ribose 1-diphosphate: step 5/9. In terms of biological role, IGPS catalyzes the conversion of PRFAR and glutamine to IGP, AICAR and glutamate. The HisF subunit catalyzes the cyclization activity that produces IGP and AICAR from PRFAR using the ammonia provided by the HisH subunit. The polypeptide is Imidazole glycerol phosphate synthase subunit HisF (Bacteroides fragilis (strain YCH46)).